The following is a 306-amino-acid chain: UDP-N-acetylenolpyruvoylglucosamine reductase (306 aa).

Positions 30-216 (RIGGPVPYIL…KSKLIDFSTR (187 aa)) constitute an FAD-binding PCMH-type domain. The active site involves arginine 180. Serine 230 acts as the Proton donor in catalysis. Glutamate 301 is a catalytic residue.

The protein belongs to the MurB family. It depends on FAD as a cofactor.

It is found in the cytoplasm. The catalysed reaction is UDP-N-acetyl-alpha-D-muramate + NADP(+) = UDP-N-acetyl-3-O-(1-carboxyvinyl)-alpha-D-glucosamine + NADPH + H(+). The protein operates within cell wall biogenesis; peptidoglycan biosynthesis. Its function is as follows. Cell wall formation. This is UDP-N-acetylenolpyruvoylglucosamine reductase from Petrotoga mobilis (strain DSM 10674 / SJ95).